We begin with the raw amino-acid sequence, 766 residues long: MQLEATHQKENHLSPLASFIFPDFRALFNIGFNLYSNINYKEVDINGFEIYIVEQWAAQRKISTLITSYTGNLQDTISAVEVALPEDPEEWPCCLKKYHEELLKFSSPKKTAKGTLFVTNLSSFKSTLNLLHVECGNLKKIWKNFKTNYDLKRLHCGGRSAQLLKKTPSASIAKFAQLYKFPNSAFSHEITSDFQQPSLQNDNSSISSIENIPVNHCPVVELTTLVQISLSYFALFEYKKERDGLLCNGTKQSLEKWWEIYGKRYHGIDKPKNETILGPTTVASLLSLVLTCYFKLMVEDCMSAKDPFDEEEFYSGLYAFQKKYGLSKNNKQTSLDELTIDKLFEVSSKTSNKDIFKFKKVVKSTVQDMTGKGNFMHLSNEILTTDLDTLVKNIHGGSLGKLWKGRSASRKETCMVWERKTFLSFKFERGDPSLQLENNELFYGTSVPSEQLTTSNKEDSDTQPTKRNSIYDIANGSKSSLSISSMFCNYDETRYKSTNNLNRAYRGEYFRRNSIPFCNDGIHDTKKISADLNKIDGLYRCNSYSEVQNAIELWSLPFDSSVIRLARDLLKIQSLMSVQRQLDEIRDGYLGKNSQRSYQNDLMFRQSLNKLQEMCERCKRGSNEFHWEYGNMQNKQQILESEKKDMKSLSSKLKYNVRILDRRVRDVEASVDHFDRKLEDVRKKLLEQNNSKDISMALESPCDKFEFDSFMDSIVQSQQTKYEGLCFKILDKKSLRKLKKEFWKWSTWTFDTFLYKNRPNKEKDTL.

Residues 447–469 are disordered; sequence VPSEQLTTSNKEDSDTQPTKRNS. Phosphoserine is present on serine 514.

It to yeast STB2.

Functionally, binds to SIN3. In Saccharomyces cerevisiae (strain ATCC 204508 / S288c) (Baker's yeast), this protein is Protein STB6 (STB6).